A 428-amino-acid chain; its full sequence is Adenylosuccinate synthetase (428 aa).

GTP contacts are provided by residues 12–18 (GDEGKGK) and 40–42 (GHS). Residue Asp-13 is the Proton acceptor of the active site. Mg(2+) contacts are provided by Asp-13 and Gly-40. IMP contacts are provided by residues 13–16 (DEGK), 38–41 (NAGH), Thr-128, Arg-142, Gln-223, Thr-238, and Arg-302. Residue His-41 is the Proton donor of the active site. Position 298–304 (298–304 (VTTGRPR)) interacts with substrate. GTP is bound by residues Arg-304, 330 to 332 (KLD), and 412 to 414 (GTG).

This sequence belongs to the adenylosuccinate synthetase family. In terms of assembly, homodimer. Mg(2+) serves as cofactor.

It localises to the cytoplasm. It catalyses the reaction IMP + L-aspartate + GTP = N(6)-(1,2-dicarboxyethyl)-AMP + GDP + phosphate + 2 H(+). The protein operates within purine metabolism; AMP biosynthesis via de novo pathway; AMP from IMP: step 1/2. Functionally, plays an important role in the de novo pathway of purine nucleotide biosynthesis. Catalyzes the first committed step in the biosynthesis of AMP from IMP. The protein is Adenylosuccinate synthetase of Bifidobacterium longum (strain NCC 2705).